A 198-amino-acid chain; its full sequence is Recombination protein RecR (198 aa).

Residues 58–73 form a C4-type zinc finger; that stretch reads CSVCGNFTDTDPCAIC. Residues 81–175 form the Toprim domain; sequence DIICVVEQPK…KVTRIAAGIP (95 aa).

The protein belongs to the RecR family.

Functionally, may play a role in DNA repair. It seems to be involved in an RecBC-independent recombinational process of DNA repair. It may act with RecF and RecO. The sequence is that of Recombination protein RecR from Clostridium perfringens (strain ATCC 13124 / DSM 756 / JCM 1290 / NCIMB 6125 / NCTC 8237 / Type A).